A 720-amino-acid polypeptide reads, in one-letter code: TAL effector protein Rip19 (720 aa).

2 disordered regions span residues 13 to 85 (SVSL…PSLV) and 175 to 205 (QAFASPPRAPRSARARRARTGGDAWPAPTFL). A compositionally biased stretch (pro residues) spans 67-85 (PRRPLPVAPASAPPAPSLV). The short motif at 185–191 (RSARARR) is the Nuclear localization signal 1 element. One copy of the Cryptic repeat -1 repeat lies at 286–320 (LTRAHIVDIARQRSGDLALQALLPVATALTAAPLR). The stretch at 321-354 (LSASQIATVAQYGERPAIQALYRLRRKLTRAPLH) is one Cryptic repeat 0 repeat. Residues 355 to 389 (LTPQQVVAIASHDGGKPALEAVWAKLPVLRGVPYA) form a Core repeat 1 repeat. The Cryptic repeat +1 repeat unit spans residues 390–423 (LSTAQVVAIACISGQQALEAIEAHMPTLRQAPHS). The stretch at 424 to 457 (LSPERVAAIACIGGRSAVEAVRQGLPVKAIRRIR) is one Cryptic repeat +2 repeat. 3 short sequence motifs (nuclear localization signal) span residues 455 to 458 (RIRR), 583 to 586 (HRKR), and 620 to 623 (RRKR). The interval 571–611 (SPGMAGQSACSPHRKRPAETAIAPRSIRRRPNNAGQPSEPW) is disordered.

This sequence belongs to the transcription activator-like effector (TALE) family. RipTAL/RTL subfamily.

It localises to the secreted. It is found in the host nucleus. Its function is as follows. Does not activate plant gene transcription, because it has too few core repeats. This is TAL effector protein Rip19 from Ralstonia solanacearum (Pseudomonas solanacearum).